The following is a 282-amino-acid chain: Kanosamine-6-phosphate phosphatase (282 aa).

The Nucleophile role is filled by aspartate 25. The Mg(2+) site is built by aspartate 25 and aspartate 27. Position 209 (lysine 209) interacts with phosphate. Mg(2+) is bound by residues aspartate 232 and serine 233. Asparagine 235 is a phosphate binding site.

This sequence belongs to the HAD-like hydrolase superfamily. Cof family. As to quaternary structure, homotetramer. Mg(2+) is required as a cofactor.

The catalysed reaction is D-kanosamine 6-phosphate + H2O = kanosamine + phosphate. It functions in the pathway antibiotic biosynthesis; kanosamine biosynthesis. Functionally, involved in the biosynthesis of kanosamine (3-amino-3-deoxy-D-glucose), which is known to have antibiotic and antifungal properties, and to be a precursor of the antibiotic neotrehalosadiamine (3,3'-diamino-3,3'-dideoxy-alpha,beta-trehalose (NTD)). Catalyzes the dephosphorylation of kanosamine 6-phosphate to yield kanosamine. There is a trace amount of activity using glucosamine-6-phosphate. The chain is Kanosamine-6-phosphate phosphatase (ntdB) from Bacillus subtilis (strain 168).